Consider the following 579-residue polypeptide: DELLA protein GAIP (579 aa).

Residues Met1–Ser25 are disordered. Residues Asp46–Ala50 carry the DELLA motif motif. The GRAS domain occupies Val202–Lys570. The tract at residues Ile209–Ile263 is leucine repeat I (LRI). The segment at Gln281–Gly346 is VHIID. A VHIID motif is present at residues Val312–Asp316. The leucine repeat II (LRII) stretch occupies residues Asp360 to Ser392. Residues Val404–Asn491 form a PFYRE region. An LXXLL motif motif is present at residues Leu412 to Leu416. Residues Ala494–Lys570 are SAW.

It belongs to the GRAS family. DELLA subfamily. In terms of processing, phosphorylated. Ubiquitinated. Upon GA application it is ubiquitinated, leading to its subsequent degradation.

The protein resides in the nucleus. Functionally, probable transcriptional regulator that acts as a repressor of the gibberellin (GA) signaling pathway. Probably acts by participating in large multiprotein complexes that represses transcription of GA-inducible genes. Upon GA application, it is degraded by the proteasome, allowing the GA signaling pathway. The polypeptide is DELLA protein GAIP (GAIP) (Cucurbita maxima (Pumpkin)).